The sequence spans 1013 residues: A-type ATP synthase subunit A (1013 aa).

Positions 392-525 (FLGYVIGDGT…LTYLLAKLGI (134 aa)) constitute a DOD-type homing endonuclease domain.

Belongs to the ATPase alpha/beta chains family. In terms of assembly, has multiple subunits with at least A(3), B(3), C, D, E, F, H, I and proteolipid K(x). This protein undergoes a protein self splicing that involves a post-translational excision of the VDE intervening region (intein) followed by peptide ligation.

The protein resides in the cell membrane. It carries out the reaction ATP + H2O + 4 H(+)(in) = ADP + phosphate + 5 H(+)(out). Functionally, component of the A-type ATP synthase that produces ATP from ADP in the presence of a proton gradient across the membrane. The A chain is the catalytic subunit. This chain is A-type ATP synthase subunit A, found in Pyrococcus furiosus (strain ATCC 43587 / DSM 3638 / JCM 8422 / Vc1).